Here is a 71-residue protein sequence, read N- to C-terminus: DNA-directed RNA polymerase subunit epsilon (71 aa).

It belongs to the RNA polymerase subunit epsilon family. As to quaternary structure, RNAP is composed of a core of 2 alpha, a beta and a beta' subunit. The core is associated with a delta subunit, and at least one of epsilon or omega. When a sigma factor is associated with the core the holoenzyme is formed, which can initiate transcription.

The catalysed reaction is RNA(n) + a ribonucleoside 5'-triphosphate = RNA(n+1) + diphosphate. Its function is as follows. A non-essential component of RNA polymerase (RNAP). This chain is DNA-directed RNA polymerase subunit epsilon, found in Staphylococcus carnosus (strain TM300).